The sequence spans 260 residues: Dolichol-phosphate mannosyltransferase subunit 1 (260 aa).

The segment at 1 to 25 (MASTGASRSLAASPRPPQGRSSRQD) is disordered. Ala-2 is subject to N-acetylalanine. Residues Ser-3 and Ser-9 each carry the phosphoserine modification. GDP-alpha-D-mannose contacts are provided by Pro-32, Tyr-34, Glu-36, Ile-63, Asp-65, Asp-118, Ala-119, Asp-120, Arg-147, Arg-234, and Lys-240. Mg(2+) is bound at residue Asp-120. Asp-120 contributes to the Mn(2+) binding site.

It belongs to the glycosyltransferase 2 family. As to quaternary structure, component of the dolichol-phosphate mannose (DPM) synthase complex composed of DPM1, DPM2 and DPM3; within the complex, directly interacts with DPM3. This interaction may stabilize DPM1. Mg(2+) serves as cofactor. It depends on Mn(2+) as a cofactor. Requires Ca(2+) as cofactor.

It is found in the endoplasmic reticulum. It catalyses the reaction a di-trans,poly-cis-dolichyl phosphate + GDP-alpha-D-mannose = a di-trans,poly-cis-dolichyl beta-D-mannosyl phosphate + GDP. Its pathway is protein modification; protein glycosylation. Transfers mannose from GDP-mannose to dolichol monophosphate to form dolichol phosphate mannose (Dol-P-Man) which is the mannosyl donor in pathways leading to N-glycosylation, glycosyl phosphatidylinositol membrane anchoring, and O-mannosylation of proteins; catalytic subunit of the dolichol-phosphate mannose (DPM) synthase complex. This is Dolichol-phosphate mannosyltransferase subunit 1 (Dpm1) from Mus musculus (Mouse).